The primary structure comprises 480 residues: MATAANQIGRVTQVIGAVVDVQFEGHLPAILNSLETKNGGNRLVLEVAQHLGESTVRAIAMDTTEGLVRGQEVTDTGAPIRVPVGEGTLGRIINVIGEPIDEAGPVKADNVRAIHQEAPTYTDQSTEAEILVTGIKVVDLLAPYAKGGKIGLFGGAGVGKTVLIQELINNVAKAHGGYSVFAGVGERTREGNDLYHEFIESKVNADPHNPDPSVKSKCALVFGQMNEPPGARARVALTGLTIAEDFRDKGQDVLFFVDNIFRFTQAGSEVSALLGRIPSAVGYQPTLATDMGALQERITTTTKGSITSVQAIYVPADDLTDPAPATSFAHLDATTTLSRSIAEKGIYPAVDPLDSTSRMLSPLVVGEEHYAVARQVQQVLQRYKALQDIIAILGMDELSEEDKLTVARARKVERFMSQPFHVAEIFTGSPGKFVELADTIKGFKGLVEGKYDHLPEAAFYMVGTIEEAVEKGKKLAAEAA.

154-161 lines the ATP pocket; sequence GGAGVGKT.

Belongs to the ATPase alpha/beta chains family. In terms of assembly, F-type ATPases have 2 components, CF(1) - the catalytic core - and CF(0) - the membrane proton channel. CF(1) has five subunits: alpha(3), beta(3), gamma(1), delta(1), epsilon(1). CF(0) has four main subunits: a(1), b(1), b'(1) and c(9-12).

The protein localises to the cell inner membrane. It carries out the reaction ATP + H2O + 4 H(+)(in) = ADP + phosphate + 5 H(+)(out). Functionally, produces ATP from ADP in the presence of a proton gradient across the membrane. The catalytic sites are hosted primarily by the beta subunits. The polypeptide is ATP synthase subunit beta (Bradyrhizobium sp. (strain ORS 278)).